We begin with the raw amino-acid sequence, 155 residues long: DNA gyrase inhibitor (155 aa).

Belongs to the DNA gyrase inhibitor family. As to quaternary structure, interacts with DNA gyrase.

Its subcellular location is the cytoplasm. Inhibits the supercoiling activity of DNA gyrase. Acts by inhibiting DNA gyrase at an early step, prior to (or at the step of) binding of DNA by the gyrase. It protects cells against toxins that target DNA gyrase, by inhibiting activity of these toxins and reducing the formation of lethal double-strand breaks in the cell. The polypeptide is DNA gyrase inhibitor (Edwardsiella piscicida).